Consider the following 496-residue polypeptide: Probable cytosol aminopeptidase (496 aa).

Mn(2+) contacts are provided by K266 and D271. The active site involves K278. Positions 290, 349, and 351 each coordinate Mn(2+). The active site involves R353.

This sequence belongs to the peptidase M17 family. Mn(2+) is required as a cofactor.

The protein resides in the cytoplasm. The enzyme catalyses Release of an N-terminal amino acid, Xaa-|-Yaa-, in which Xaa is preferably Leu, but may be other amino acids including Pro although not Arg or Lys, and Yaa may be Pro. Amino acid amides and methyl esters are also readily hydrolyzed, but rates on arylamides are exceedingly low.. It catalyses the reaction Release of an N-terminal amino acid, preferentially leucine, but not glutamic or aspartic acids.. Presumably involved in the processing and regular turnover of intracellular proteins. Catalyzes the removal of unsubstituted N-terminal amino acids from various peptides. The polypeptide is Probable cytosol aminopeptidase (Trichodesmium erythraeum (strain IMS101)).